A 125-amino-acid polypeptide reads, in one-letter code: MADLAKIEEQLSSLTLMQAAELVKMLEEKWGVSAAAPITVASAGVAAPLAEAVTEKTEFEVVLTATGDKKVEVIKIVKDITGLGLIEAKKLVDEAPKSIKNNVKKAEAEEIKSKLEAAGAKVELK.

This sequence belongs to the bacterial ribosomal protein bL12 family. Homodimer. Part of the ribosomal stalk of the 50S ribosomal subunit. Forms a multimeric L10(L12)X complex, where L10 forms an elongated spine to which 2 to 4 L12 dimers bind in a sequential fashion. Binds GTP-bound translation factors.

Forms part of the ribosomal stalk which helps the ribosome interact with GTP-bound translation factors. Is thus essential for accurate translation. The protein is Large ribosomal subunit protein bL12 of Rickettsia prowazekii (strain Madrid E).